A 212-amino-acid polypeptide reads, in one-letter code: 2,3-bisphosphoglycerate-dependent phosphoglycerate mutase (212 aa).

Substrate is bound by residues R9–N16, T22–G23, R61, E88–Y91, K99, R115–R116, and G159–N160. H10 functions as the Tele-phosphohistidine intermediate in the catalytic mechanism. Residue E88 is the Proton donor/acceptor of the active site.

The protein belongs to the phosphoglycerate mutase family. BPG-dependent PGAM subfamily. Homodimer.

The catalysed reaction is (2R)-2-phosphoglycerate = (2R)-3-phosphoglycerate. The protein operates within carbohydrate degradation; glycolysis; pyruvate from D-glyceraldehyde 3-phosphate: step 3/5. Functionally, catalyzes the interconversion of 2-phosphoglycerate and 3-phosphoglycerate. The chain is 2,3-bisphosphoglycerate-dependent phosphoglycerate mutase from Methylorubrum extorquens (strain CM4 / NCIMB 13688) (Methylobacterium extorquens).